Reading from the N-terminus, the 529-residue chain is Bifunctional purine biosynthesis protein PurH (529 aa).

An MGS-like domain is found at 1–148; sequence MQQRRSVRRA…KNHKDVAIVV (148 aa).

It belongs to the PurH family.

It carries out the reaction (6R)-10-formyltetrahydrofolate + 5-amino-1-(5-phospho-beta-D-ribosyl)imidazole-4-carboxamide = 5-formamido-1-(5-phospho-D-ribosyl)imidazole-4-carboxamide + (6S)-5,6,7,8-tetrahydrofolate. It catalyses the reaction IMP + H2O = 5-formamido-1-(5-phospho-D-ribosyl)imidazole-4-carboxamide. The protein operates within purine metabolism; IMP biosynthesis via de novo pathway; 5-formamido-1-(5-phospho-D-ribosyl)imidazole-4-carboxamide from 5-amino-1-(5-phospho-D-ribosyl)imidazole-4-carboxamide (10-formyl THF route): step 1/1. It participates in purine metabolism; IMP biosynthesis via de novo pathway; IMP from 5-formamido-1-(5-phospho-D-ribosyl)imidazole-4-carboxamide: step 1/1. This is Bifunctional purine biosynthesis protein PurH from Salmonella arizonae (strain ATCC BAA-731 / CDC346-86 / RSK2980).